A 157-amino-acid chain; its full sequence is Endoribonuclease YbeY (157 aa).

Zn(2+) is bound by residues His-114, His-118, and His-124.

This sequence belongs to the endoribonuclease YbeY family. The cofactor is Zn(2+).

Its subcellular location is the cytoplasm. Functionally, single strand-specific metallo-endoribonuclease involved in late-stage 70S ribosome quality control and in maturation of the 3' terminus of the 16S rRNA. The polypeptide is Endoribonuclease YbeY (Edwardsiella ictaluri (strain 93-146)).